The sequence spans 155 residues: 17.6 kDa class I heat shock protein 1 (155 aa).

Residues 39-154 (SSSAIANARV…KAQVKSIDIS (116 aa)) enclose the sHSP domain.

This sequence belongs to the small heat shock protein (HSP20) family. As to quaternary structure, forms oligomeric structures. Binds to AKR2A.

The protein resides in the cytoplasm. Functionally, possesses chaperone activity. The polypeptide is 17.6 kDa class I heat shock protein 1 (HSP17.6A) (Arabidopsis thaliana (Mouse-ear cress)).